The primary structure comprises 469 residues: 3-isopropylmalate dehydratase large subunit (469 aa).

3 residues coordinate [4Fe-4S] cluster: Cys349, Cys410, and Cys413.

The protein belongs to the aconitase/IPM isomerase family. LeuC type 1 subfamily. As to quaternary structure, heterodimer of LeuC and LeuD. [4Fe-4S] cluster serves as cofactor.

It carries out the reaction (2R,3S)-3-isopropylmalate = (2S)-2-isopropylmalate. It participates in amino-acid biosynthesis; L-leucine biosynthesis; L-leucine from 3-methyl-2-oxobutanoate: step 2/4. Its function is as follows. Catalyzes the isomerization between 2-isopropylmalate and 3-isopropylmalate, via the formation of 2-isopropylmaleate. This chain is 3-isopropylmalate dehydratase large subunit, found in Azoarcus sp. (strain BH72).